The following is a 633-amino-acid chain: Probable potassium transport system protein Kup (633 aa).

Helical transmembrane passes span 21-41 (MLVA…LYTL), 61-81 (ILSL…MMFV), 112-132 (LLVV…MITP), 149-169 (GIDH…FLIQ), 176-196 (IGIL…ALGV), 217-237 (FFMV…LALT), 258-278 (WFLL…ALLL), 290-310 (LLAP…ATVI), 348-368 (IYIG…VIGF), 377-397 (AYGV…SAVM), 398-418 (LLLW…FLLV), and 430-450 (IVQG…LMTT).

The protein belongs to the HAK/KUP transporter (TC 2.A.72) family.

It is found in the cell inner membrane. It catalyses the reaction K(+)(in) + H(+)(in) = K(+)(out) + H(+)(out). Transport of potassium into the cell. Likely operates as a K(+):H(+) symporter. This chain is Probable potassium transport system protein Kup, found in Pseudomonas fluorescens (strain Pf0-1).